The sequence spans 436 residues: GTPase Der (436 aa).

2 consecutive EngA-type G domains span residues 4 to 167 and 176 to 351; these read PVVA…PKGG and IKFC…DNHA. Residues 10 to 17, 57 to 61, 119 to 122, 182 to 189, 229 to 233, and 294 to 297 contribute to the GTP site; these read GRPNVGKS, DTGGI, NKID, DTAGM, and NKWD. In terms of domain architecture, KH-like spans 352–436; that stretch reads MRVQTNVLNE…PIKIIARPRK (85 aa).

The protein belongs to the TRAFAC class TrmE-Era-EngA-EngB-Septin-like GTPase superfamily. EngA (Der) GTPase family. As to quaternary structure, associates with the 50S ribosomal subunit.

Functionally, GTPase that plays an essential role in the late steps of ribosome biogenesis. In Geobacillus kaustophilus (strain HTA426), this protein is GTPase Der.